The sequence spans 435 residues: ATP-dependent protease ATPase subunit HslU (435 aa).

Residues Ile18, 60 to 65 (GVGKTE), Asp248, Glu313, and Arg385 each bind ATP.

The protein belongs to the ClpX chaperone family. HslU subfamily. As to quaternary structure, a double ring-shaped homohexamer of HslV is capped on each side by a ring-shaped HslU homohexamer. The assembly of the HslU/HslV complex is dependent on binding of ATP.

The protein localises to the cytoplasm. In terms of biological role, ATPase subunit of a proteasome-like degradation complex; this subunit has chaperone activity. The binding of ATP and its subsequent hydrolysis by HslU are essential for unfolding of protein substrates subsequently hydrolyzed by HslV. HslU recognizes the N-terminal part of its protein substrates and unfolds these before they are guided to HslV for hydrolysis. In Rhizobium johnstonii (strain DSM 114642 / LMG 32736 / 3841) (Rhizobium leguminosarum bv. viciae), this protein is ATP-dependent protease ATPase subunit HslU.